A 315-amino-acid chain; its full sequence is L-lactate dehydrogenase (315 aa).

Residues V16, D37, and 81 to 82 contribute to the NAD(+) site; that span reads GA. Residues Q84, R90, and 122 to 125 contribute to the substrate site; that span reads NPVD. Residues 120 to 122 and S145 each bind NAD(+); that span reads VSN. Residue 150–153 participates in substrate binding; the sequence is DTAR. Beta-D-fructose 1,6-bisphosphate is bound by residues R155 and H170. H177 acts as the Proton acceptor in catalysis. Y224 carries the post-translational modification Phosphotyrosine. T233 is a binding site for substrate.

Belongs to the LDH/MDH superfamily. LDH family. In terms of assembly, homotetramer.

Its subcellular location is the cytoplasm. It carries out the reaction (S)-lactate + NAD(+) = pyruvate + NADH + H(+). It functions in the pathway fermentation; pyruvate fermentation to lactate; (S)-lactate from pyruvate: step 1/1. Its activity is regulated as follows. Allosterically activated by fructose 1,6-bisphosphate (FBP). In terms of biological role, catalyzes the conversion of lactate to pyruvate. This chain is L-lactate dehydrogenase, found in Treponema denticola (strain ATCC 35405 / DSM 14222 / CIP 103919 / JCM 8153 / KCTC 15104).